Reading from the N-terminus, the 198-residue chain is Proteasome subunit beta type-4 (198 aa).

M1 is subject to N-acetylmethionine. The residue at position 76 (S76) is a Phosphoserine.

This sequence belongs to the peptidase T1B family. The 26S proteasome consists of a 20S proteasome core and two 19S regulatory subunits. The 20S proteasome core is composed of 28 subunits that are arranged in four stacked rings, resulting in a barrel-shaped structure. The two end rings are each formed by seven alpha subunits, and the two central rings are each formed by seven beta subunits. The catalytic chamber with the active sites is on the inside of the barrel.

It is found in the cytoplasm. The protein resides in the nucleus. In terms of biological role, non-catalytic component of the proteasome which degrades poly-ubiquitinated proteins in the cytoplasm and in the nucleus. It is essential for the regulated turnover of proteins and for the removal of misfolded proteins. The proteasome is a multicatalytic proteinase complex that is characterized by its ability to cleave peptides with Arg, Phe, Tyr, Leu, and Glu adjacent to the leaving group at neutral or slightly basic pH. It has an ATP-dependent proteolytic activity. This subunit has a chymotrypsin-like activity. The sequence is that of Proteasome subunit beta type-4 (PRE1) from Saccharomyces cerevisiae (strain ATCC 204508 / S288c) (Baker's yeast).